We begin with the raw amino-acid sequence, 676 residues long: ATP-dependent zinc metalloprotease FtsH (676 aa).

The Cytoplasmic portion of the chain corresponds to 1–12 (MSFFDKIFKKFH). Residues 13 to 33 (MGVLYFAVILIGATFIYCYFT) form a helical membrane-spanning segment. Residues 34 to 115 (KHEKKDNNTF…DPRPWNGYEH (82 aa)) lie on the Extracellular side of the membrane. The helical transmembrane segment at 116–136 (VFWVFRQCLTMLFFYCFFLFF) threads the bilayer. Topologically, residues 137–676 (ADTIKQMGQE…EVLSTDSEQT (540 aa)) are cytoplasmic. Position 212–219 (212–219 (GPPGTGKT)) interacts with ATP. A Zn(2+)-binding site is contributed by H433. E434 is an active-site residue. Residues H437 and D509 each coordinate Zn(2+). Residues 610–676 (EKEETNAPTQ…EVLSTDSEQT (67 aa)) are disordered. Over residues 615–636 (NAPTQTTSQMSSNNETTNTDKT) the composition is skewed to polar residues. Low complexity predominate over residues 650–667 (NQESNESNPNNNEKASPE).

The protein in the central section; belongs to the AAA ATPase family. In the C-terminal section; belongs to the peptidase M41 family. Homohexamer. The cofactor is Zn(2+).

The protein localises to the cell membrane. Its function is as follows. Acts as a processive, ATP-dependent zinc metallopeptidase for both cytoplasmic and membrane proteins. Plays a role in the quality control of integral membrane proteins. The protein is ATP-dependent zinc metalloprotease FtsH of Aster yellows witches'-broom phytoplasma (strain AYWB).